The following is a 174-amino-acid chain: Large ribosomal subunit protein uL6 (174 aa).

Belongs to the universal ribosomal protein uL6 family. In terms of assembly, part of the 50S ribosomal subunit.

This protein binds to the 23S rRNA, and is important in its secondary structure. It is located near the subunit interface in the base of the L7/L12 stalk, and near the tRNA binding site of the peptidyltransferase center. This chain is Large ribosomal subunit protein uL6, found in Acidithiobacillus ferrooxidans (strain ATCC 23270 / DSM 14882 / CIP 104768 / NCIMB 8455) (Ferrobacillus ferrooxidans (strain ATCC 23270)).